A 575-amino-acid chain; its full sequence is MQRVLRAAAAGIGHASGHRAPRWGAAAAAARWLSGGREAMSYDVVVVGAGPAGLAAAIRLKQLCRDADTDLSVCVLEKGSEVGAHVLSGNVFEPRALDELIPKWRQEDTPIRVPVSSDKFWLLTKNKAWTLPSPFDNKGNYVISLSQMVRWMASKAEELGVEVYPGFAASEILYDENQIVTGVATNDVGIAKDGSKRETFQPGVELRGRMTLLAEGCRGSLSEKIIRNHKLRESGQGQHQTYALGIKEVWEIEEGKHKPGSVIHTVGWPLDSKTYGGSFMYHLDDRQLAIGLVVALNYQNPFMSPYDEFQKFKQHPAVRTILDGGTVLQYGARTLNEGGFQSIPNPVFPGGAIIGCSAGFLNVPKIKGTHTAMKSGMLAAEATFKTLVEGSSMELYWENLKKSWIWEELYRARNYRPAFEYGFIPGIALSALERYVFKGKSPFTLKHGIPDHEATDMASLHSPIQYPKPDGQISFDVPTSLYRSSTNHEHDQPPHLRLRDPTVPERVNLPLYAGPESHYCPARVYEYVTDEKGDQKLHINAQNCLHCKACDIKDPKQNIEWTVPEGGGGPGYTVM.

Residues 1 to 33 (MQRVLRAAAAGIGHASGHRAPRWGAAAAAARWL) constitute a mitochondrion transit peptide. 44–58 (VVVVGAGPAGLAAAI) contributes to the FAD binding site. Residues 82-103 (VGAHVLSGNVFEPRALDELIPK) lie within the membrane without spanning it. The a ubiquinone site is built by Gly276 and Gly277. The stretch at 343–363 (IPNPVFPGGAIIGCSAGFLNV) is an intramembrane region. Positions 520, 544, 547, and 550 each coordinate [4Fe-4S] cluster. The 30-residue stretch at 535 to 564 (QKLHINAQNCLHCKACDIKDPKQNIEWTVP) folds into the 4Fe-4S ferredoxin-type domain.

The protein belongs to the ETF-QO/FixC family. [4Fe-4S] cluster is required as a cofactor. It depends on FAD as a cofactor.

It is found in the mitochondrion inner membrane. The catalysed reaction is a ubiquinone + reduced [electron-transfer flavoprotein] = a ubiquinol + oxidized [electron-transfer flavoprotein] + H(+). Functionally, accepts electrons from ETF and reduces ubiquinone. This Oryza sativa subsp. japonica (Rice) protein is Electron transfer flavoprotein-ubiquinone oxidoreductase, mitochondrial.